A 198-amino-acid polypeptide reads, in one-letter code: Probable GTP-binding protein EngB (198 aa).

Residues 36 to 198 (SEPQFAFIGR…NLSKLQELLE (163 aa)) form the EngB-type G domain. Residues 44–51 (GRSNVGKS), 70–74 (GRTQL), 88–91 (DLPG), 155–158 (NKID), and 182–184 (ISA) each bind GTP. 2 residues coordinate Mg(2+): Ser51 and Thr72.

The protein belongs to the TRAFAC class TrmE-Era-EngA-EngB-Septin-like GTPase superfamily. EngB GTPase family. It depends on Mg(2+) as a cofactor.

Functionally, necessary for normal cell division and for the maintenance of normal septation. This Mesomycoplasma hyopneumoniae (strain 232) (Mycoplasma hyopneumoniae) protein is Probable GTP-binding protein EngB.